A 629-amino-acid chain; its full sequence is 1-deoxy-D-xylulose-5-phosphate synthase (629 aa).

Thiamine diphosphate-binding positions include H72 and 113-115 (GHA). D144 serves as a coordination point for Mg(2+). Residues 145-146 (GA), N174, Y287, and E370 each bind thiamine diphosphate. Mg(2+) is bound at residue N174.

It belongs to the transketolase family. DXPS subfamily. Homodimer. Mg(2+) is required as a cofactor. The cofactor is thiamine diphosphate.

It catalyses the reaction D-glyceraldehyde 3-phosphate + pyruvate + H(+) = 1-deoxy-D-xylulose 5-phosphate + CO2. It functions in the pathway metabolic intermediate biosynthesis; 1-deoxy-D-xylulose 5-phosphate biosynthesis; 1-deoxy-D-xylulose 5-phosphate from D-glyceraldehyde 3-phosphate and pyruvate: step 1/1. Functionally, catalyzes the acyloin condensation reaction between C atoms 2 and 3 of pyruvate and glyceraldehyde 3-phosphate to yield 1-deoxy-D-xylulose-5-phosphate (DXP). The polypeptide is 1-deoxy-D-xylulose-5-phosphate synthase (Prochlorococcus marinus (strain AS9601)).